Here is a 337-residue protein sequence, read N- to C-terminus: 5-formaminoimidazole-4-carboxamide-1-(beta)-D-ribofuranosyl 5'-monophosphate synthetase (337 aa).

5-amino-1-(5-phospho-beta-D-ribosyl)imidazole-4-carboxamide is bound by residues His9 and Ser73. One can recognise an ATP-grasp domain in the interval 94 to 324; that stretch reads KKIFEWEADQ…IGRRIAREIR (231 aa). ATP-binding positions include 124–184 and Glu206; that span reads PEDV…VPMY. Asn234 is a 5-amino-1-(5-phospho-beta-D-ribosyl)imidazole-4-carboxamide binding site. Mg(2+) contacts are provided by Glu273 and Glu286.

This sequence belongs to the phosphohexose mutase family. The cofactor is Mg(2+). Mn(2+) is required as a cofactor.

The enzyme catalyses 5-amino-1-(5-phospho-beta-D-ribosyl)imidazole-4-carboxamide + formate + ATP = 5-formamido-1-(5-phospho-D-ribosyl)imidazole-4-carboxamide + ADP + phosphate. The protein operates within purine metabolism; IMP biosynthesis via de novo pathway; 5-formamido-1-(5-phospho-D-ribosyl)imidazole-4-carboxamide from 5-amino-1-(5-phospho-D-ribosyl)imidazole-4-carboxamide (formate route): step 1/1. Its function is as follows. Catalyzes the ATP- and formate-dependent formylation of 5-aminoimidazole-4-carboxamide-1-beta-d-ribofuranosyl 5'-monophosphate (AICAR) to 5-formaminoimidazole-4-carboxamide-1-beta-d-ribofuranosyl 5'-monophosphate (FAICAR) in the absence of folates. This is 5-formaminoimidazole-4-carboxamide-1-(beta)-D-ribofuranosyl 5'-monophosphate synthetase from Saccharolobus solfataricus (strain ATCC 35092 / DSM 1617 / JCM 11322 / P2) (Sulfolobus solfataricus).